A 722-amino-acid chain; its full sequence is Mating-type switching protein swi2 (722 aa).

Disordered regions lie at residues 1-35 and 301-342; these read MNVN…GVGS and SEEF…PLPS. Residues 9–22 are compositionally biased toward polar residues; the sequence is SIPVNTGSESISSN. Over residues 302-316 the composition is skewed to acidic residues; the sequence is EEFDFEPSREDEDFP. Over residues 319-332 the composition is skewed to polar residues; sequence TSDSTGQDPLSSEP.

In terms of assembly, interacts with swi5 and rhp51.

Its function is as follows. Required for normal mating-type switching. The protein is Mating-type switching protein swi2 (swi2) of Schizosaccharomyces pombe (strain 972 / ATCC 24843) (Fission yeast).